The chain runs to 154 residues: Cyanate hydratase (154 aa).

Active-site residues include Arg-100, Glu-103, and Ser-126.

It belongs to the cyanase family.

The catalysed reaction is cyanate + hydrogencarbonate + 3 H(+) = NH4(+) + 2 CO2. Functionally, catalyzes the reaction of cyanate with bicarbonate to produce ammonia and carbon dioxide. This Aspergillus terreus (strain NIH 2624 / FGSC A1156) protein is Cyanate hydratase.